Consider the following 257-residue polypeptide: Thiazole synthase (257 aa).

Residue Lys-96 is the Schiff-base intermediate with DXP of the active site. 1-deoxy-D-xylulose 5-phosphate contacts are provided by residues Gly-157, Ala-184 to Gly-185, and Asn-206 to Thr-207.

The protein belongs to the ThiG family. In terms of assembly, homotetramer. Forms heterodimers with either ThiH or ThiS.

It is found in the cytoplasm. The catalysed reaction is [ThiS sulfur-carrier protein]-C-terminal-Gly-aminoethanethioate + 2-iminoacetate + 1-deoxy-D-xylulose 5-phosphate = [ThiS sulfur-carrier protein]-C-terminal Gly-Gly + 2-[(2R,5Z)-2-carboxy-4-methylthiazol-5(2H)-ylidene]ethyl phosphate + 2 H2O + H(+). Its pathway is cofactor biosynthesis; thiamine diphosphate biosynthesis. Functionally, catalyzes the rearrangement of 1-deoxy-D-xylulose 5-phosphate (DXP) to produce the thiazole phosphate moiety of thiamine. Sulfur is provided by the thiocarboxylate moiety of the carrier protein ThiS. In vitro, sulfur can be provided by H(2)S. The polypeptide is Thiazole synthase (Rhizobium meliloti (strain 1021) (Ensifer meliloti)).